A 290-amino-acid polypeptide reads, in one-letter code: Glycine--tRNA ligase alpha subunit (290 aa).

It belongs to the class-II aminoacyl-tRNA synthetase family. Tetramer of two alpha and two beta subunits.

The protein resides in the cytoplasm. The catalysed reaction is tRNA(Gly) + glycine + ATP = glycyl-tRNA(Gly) + AMP + diphosphate. This Zymomonas mobilis subsp. mobilis (strain ATCC 31821 / ZM4 / CP4) protein is Glycine--tRNA ligase alpha subunit.